We begin with the raw amino-acid sequence, 311 residues long: Malate dehydrogenase (311 aa).

Residues 7 to 13 and aspartate 34 each bind NAD(+); that span reads GAAGGIG. Positions 81 and 87 each coordinate substrate. NAD(+) is bound by residues asparagine 94 and 117 to 119; that span reads ITN. Residues asparagine 119 and arginine 153 each coordinate substrate. Catalysis depends on histidine 177, which acts as the Proton acceptor. Residue methionine 227 coordinates NAD(+).

It belongs to the LDH/MDH superfamily. MDH type 1 family. In terms of assembly, homodimer.

The catalysed reaction is (S)-malate + NAD(+) = oxaloacetate + NADH + H(+). In terms of biological role, catalyzes the reversible oxidation of malate to oxaloacetate. The sequence is that of Malate dehydrogenase from Vibrio campbellii (strain ATCC BAA-1116).